We begin with the raw amino-acid sequence, 2345 residues long: Acetyl-CoA carboxylase 1 (2345 aa).

Methionine 1 is subject to N-acetylmethionine. Serine 5, serine 23, serine 25, serine 29, serine 34, serine 47, serine 49, and serine 52 each carry phosphoserine. Threonine 57 is modified (phosphothreonine). Serine 77 is subject to Phosphoserine. Serine 79 bears the Phosphoserine; by AMPK mark. The 502-residue stretch at 116 to 617 folds into the Biotin carboxylation domain; the sequence is VIEKVLIANN…DTGWLDRLIA (502 aa). Positions 274–465 constitute an ATP-grasp domain; the sequence is SKRILNVPQD…LPAAQLQIAM (192 aa). An ATP-binding site is contributed by 314 to 319; that stretch reads GGGGKG. Residues glutamate 423, glutamate 436, and asparagine 438 each coordinate Mg(2+). Residues glutamate 423, glutamate 436, and asparagine 438 each coordinate Mn(2+). Arginine 440 is an active-site residue. Residue threonine 609 is modified to Phosphothreonine. The Biotinyl-binding domain occupies 744 to 818; sequence FEKENDPSVM…DPGCVIAKMQ (75 aa). Lysine 785 carries the N6-biotinyllysine modification. Serine 834 is subject to Phosphoserine. Serine 1200 and serine 1215 each carry phosphoserine; by AMPK; in vitro. Serine 1217 is modified (phosphoserine). Phosphothreonine is present on threonine 1226. Phosphoserine is present on residues serine 1258, serine 1262, and serine 1272. Lysine 1333 carries the N6-acetyllysine modification. A CoA carboxyltransferase N-terminal domain is found at 1575–1913; the sequence is PYVTKDLLQS…NVHSSVPLLN (339 aa). The tract at residues 1575 to 2233 is carboxyltransferase; sequence PYVTKDLLQS…EDLVKKKIHS (659 aa). CoA is bound by residues arginine 1822, lysine 2126, and arginine 2128. In terms of domain architecture, CoA carboxyltransferase C-terminal spans 1917–2233; it reads PIDRIIEFVP…EDLVKKKIHS (317 aa). Position 2152 is a phosphothreonine (threonine 2152).

In terms of assembly, monomer, homodimer, and homotetramer. Can form filamentous polymers. Interacts in its inactive phosphorylated form with the BRCT domains of BRCA1 which prevents ACACA dephosphorylation and inhibits lipid synthesis. Interacts with MID1IP1; interaction with MID1IP1 promotes oligomerization and increases its activity. Requires Mg(2+) as cofactor. The cofactor is Mn(2+). Biotin is required as a cofactor. In terms of processing, the N-terminus is blocked. Post-translationally, phosphorylation on Ser-1262 is required for interaction with BRCA1. Phosphorylation at Ser-79 by AMPK inactivates enzyme activity. Phosphorylated in vitro at Ser-1200 and Ser-1215 by AMPK; the relevance of phosphorylation of these sites in vivo is however unclear. In terms of processing, the biotin cofactor is covalently attached to the central biotinyl-binding domain and is required for the catalytic activity.

The protein resides in the cytoplasm. It localises to the cytosol. It catalyses the reaction hydrogencarbonate + acetyl-CoA + ATP = malonyl-CoA + ADP + phosphate + H(+). The protein operates within lipid metabolism; malonyl-CoA biosynthesis; malonyl-CoA from acetyl-CoA: step 1/1. With respect to regulation, inhibited by phosphorylation. Citrate promotes oligomerization of the protein into filaments that correspond to the most active form of the carboxylase. Cytosolic enzyme that catalyzes the carboxylation of acetyl-CoA to malonyl-CoA, the first and rate-limiting step of de novo fatty acid biosynthesis. This is a 2 steps reaction starting with the ATP-dependent carboxylation of the biotin carried by the biotin carboxyl carrier (BCC) domain followed by the transfer of the carboxyl group from carboxylated biotin to acetyl-CoA. The chain is Acetyl-CoA carboxylase 1 from Rattus norvegicus (Rat).